A 122-amino-acid polypeptide reads, in one-letter code: Large ribosomal subunit protein uL14c (122 aa).

It belongs to the universal ribosomal protein uL14 family. In terms of assembly, part of the 50S ribosomal subunit.

The protein localises to the plastid. The protein resides in the chloroplast. In terms of biological role, binds to 23S rRNA. The protein is Large ribosomal subunit protein uL14c of Acorus calamus (Sweet flag).